A 378-amino-acid chain; its full sequence is Mannitol-1-phosphate 5-dehydrogenase (378 aa).

4 to 15 provides a ligand contact to NAD(+); the sequence is SVHFGAGNIGRG.

This sequence belongs to the mannitol dehydrogenase family.

The enzyme catalyses D-mannitol 1-phosphate + NAD(+) = beta-D-fructose 6-phosphate + NADH + H(+). The chain is Mannitol-1-phosphate 5-dehydrogenase from Streptococcus pneumoniae (strain JJA).